The sequence spans 539 residues: 3-hydroxy-3-methylglutaryl-coenzyme A reductase 1 (539 aa).

The helical transmembrane segment at 63–83 (FATVVCQLASVVYLLSLFAHP) threads the bilayer. A linker region spans residues 84 to 124 (DAPATTTGDDDDGQGGSRRARPAAAEPAPMHGHGGGMMEAD). Residues 87 to 116 (ATTTGDDDDGQGGSRRARPAAAEPAPMHGH) form a disordered region. Positions 105–114 (PAAAEPAPMH) are enriched in low complexity. A catalytic region spans residues 125–539 (DEEIVAAVAS…SSKDVAKAAS (415 aa)). Glu218 serves as the catalytic Charge relay system. Asn282 carries N-linked (GlcNAc...) asparagine glycosylation. Catalysis depends on charge relay system residues Lys350 and Asp426. A helical membrane pass occupies residues 496-516 (LATIVAGSVLAGELSLLAALA). Residue His524 is the Proton donor of the active site. N-linked (GlcNAc...) asparagine glycosylation occurs at Asn528.

It belongs to the HMG-CoA reductase family.

Its subcellular location is the endoplasmic reticulum membrane. The enzyme catalyses (R)-mevalonate + 2 NADP(+) + CoA = (3S)-3-hydroxy-3-methylglutaryl-CoA + 2 NADPH + 2 H(+). Its pathway is metabolic intermediate biosynthesis; (R)-mevalonate biosynthesis; (R)-mevalonate from acetyl-CoA: step 3/3. In terms of biological role, catalyzes the synthesis of mevalonate. The specific precursor of all isoprenoid compounds present in plants. The sequence is that of 3-hydroxy-3-methylglutaryl-coenzyme A reductase 1 (HMG1) from Oryza sativa subsp. indica (Rice).